Here is a 108-residue protein sequence, read N- to C-terminus: MAPKKDKVPPPSSKPAKSGGGKQKKKKWSKGKQKEKVNNMVLFDQGTYDKLLTEAPKFKLITPSILSDRMRINGSLARRAIRELMAKGLIRMVSAHSSQQIYTRATNT.

Residues 1–36 (MAPKKDKVPPPSSKPAKSGGGKQKKKKWSKGKQKEK) are disordered. Positions 22–31 (KQKKKKWSKG) are enriched in basic residues.

It belongs to the eukaryotic ribosomal protein eS25 family.

The protein is Small ribosomal subunit protein eS25y (RPS25B) of Arabidopsis thaliana (Mouse-ear cress).